Reading from the N-terminus, the 140-residue chain is Ribosome maturation factor RimP (140 aa).

The protein belongs to the RimP family.

It localises to the cytoplasm. Its function is as follows. Required for maturation of 30S ribosomal subunits. This chain is Ribosome maturation factor RimP, found in Campylobacter jejuni subsp. doylei (strain ATCC BAA-1458 / RM4099 / 269.97).